A 251-amino-acid chain; its full sequence is MSDDSSNSTHFGYKTVEAEKKADMVAGVFHSVAAKYDIMNDVMSFGIHRMWKRFTIESAGARPGMKVLDLAGGTGDLTAKFSRIVGETGQVTLADINDSMLKVGREKLRDKGIVGNVNYVQANAEALPFPDNHFDIITIAFGLRNVTNKDAAIASMLRVLKPGGKLLVLEFSKPQHEIMRKIYDIYSFKVLPKMGSLITKDADSYEYLAESIRMHPDQDTLKQMMEDAGFEQVNYTNMTDGIVALHKGYKF.

S-adenosyl-L-methionine contacts are provided by residues Thr-74, Asp-95, and Asn-123–Ala-124.

The protein belongs to the class I-like SAM-binding methyltransferase superfamily. MenG/UbiE family.

The catalysed reaction is a 2-demethylmenaquinol + S-adenosyl-L-methionine = a menaquinol + S-adenosyl-L-homocysteine + H(+). It carries out the reaction a 2-methoxy-6-(all-trans-polyprenyl)benzene-1,4-diol + S-adenosyl-L-methionine = a 5-methoxy-2-methyl-3-(all-trans-polyprenyl)benzene-1,4-diol + S-adenosyl-L-homocysteine + H(+). The protein operates within quinol/quinone metabolism; menaquinone biosynthesis; menaquinol from 1,4-dihydroxy-2-naphthoate: step 2/2. It participates in cofactor biosynthesis; ubiquinone biosynthesis. Methyltransferase required for the conversion of demethylmenaquinol (DMKH2) to menaquinol (MKH2) and the conversion of 2-polyprenyl-6-methoxy-1,4-benzoquinol (DDMQH2) to 2-polyprenyl-3-methyl-6-methoxy-1,4-benzoquinol (DMQH2). The sequence is that of Ubiquinone/menaquinone biosynthesis C-methyltransferase UbiE from Shewanella pealeana (strain ATCC 700345 / ANG-SQ1).